Reading from the N-terminus, the 467-residue chain is tRNA-2-methylthio-N(6)-dimethylallyladenosine synthase (467 aa).

The disordered stretch occupies residues 1-20 (MSDDTTQIEPAMAQETSPRA). The MTTase N-terminal domain maps to 23-143 (RKVFVKTYGC…LPNALARVRG (121 aa)). Residues Cys-32, Cys-68, Cys-106, Cys-184, Cys-188, and Cys-191 each contribute to the [4Fe-4S] cluster site. Positions 170–402 (RKRGVSAFLT…QALLSAQQYA (233 aa)) constitute a Radical SAM core domain. A TRAM domain is found at 405 to 467 (DSMIGRKMDV…TNSLIAQKLA (63 aa)).

This sequence belongs to the methylthiotransferase family. MiaB subfamily. As to quaternary structure, monomer. Requires [4Fe-4S] cluster as cofactor.

The protein resides in the cytoplasm. The catalysed reaction is N(6)-dimethylallyladenosine(37) in tRNA + (sulfur carrier)-SH + AH2 + 2 S-adenosyl-L-methionine = 2-methylsulfanyl-N(6)-dimethylallyladenosine(37) in tRNA + (sulfur carrier)-H + 5'-deoxyadenosine + L-methionine + A + S-adenosyl-L-homocysteine + 2 H(+). Catalyzes the methylthiolation of N6-(dimethylallyl)adenosine (i(6)A), leading to the formation of 2-methylthio-N6-(dimethylallyl)adenosine (ms(2)i(6)A) at position 37 in tRNAs that read codons beginning with uridine. The polypeptide is tRNA-2-methylthio-N(6)-dimethylallyladenosine synthase (Brucella suis (strain ATCC 23445 / NCTC 10510)).